We begin with the raw amino-acid sequence, 87 residues long: Small ribosomal subunit protein bS20 (87 aa).

The span at 1–22 (MANIKSAKKRAVQSEKRRKHNA) shows a compositional bias: basic residues. The disordered stretch occupies residues 1-27 (MANIKSAKKRAVQSEKRRKHNASSRSM).

Belongs to the bacterial ribosomal protein bS20 family.

In terms of biological role, binds directly to 16S ribosomal RNA. This Pectobacterium atrosepticum (strain SCRI 1043 / ATCC BAA-672) (Erwinia carotovora subsp. atroseptica) protein is Small ribosomal subunit protein bS20.